A 374-amino-acid polypeptide reads, in one-letter code: Chaperone protein DnaJ (374 aa).

The 65-residue stretch at Asp-4–Gly-68 folds into the J domain. Residues Gly-132–Thr-214 form a CR-type zinc finger. Zn(2+)-binding residues include Cys-145, Cys-148, Cys-162, Cys-165, Cys-188, Cys-191, Cys-202, and Cys-205. CXXCXGXG motif repeat units lie at residues Cys-145–Gly-152, Cys-162–Gly-169, Cys-188–Gly-195, and Cys-202–Gly-209.

This sequence belongs to the DnaJ family. Homodimer. The cofactor is Zn(2+).

The protein localises to the cytoplasm. Its function is as follows. Participates actively in the response to hyperosmotic and heat shock by preventing the aggregation of stress-denatured proteins and by disaggregating proteins, also in an autonomous, DnaK-independent fashion. Unfolded proteins bind initially to DnaJ; upon interaction with the DnaJ-bound protein, DnaK hydrolyzes its bound ATP, resulting in the formation of a stable complex. GrpE releases ADP from DnaK; ATP binding to DnaK triggers the release of the substrate protein, thus completing the reaction cycle. Several rounds of ATP-dependent interactions between DnaJ, DnaK and GrpE are required for fully efficient folding. Also involved, together with DnaK and GrpE, in the DNA replication of plasmids through activation of initiation proteins. In Trichodesmium erythraeum (strain IMS101), this protein is Chaperone protein DnaJ.